Here is a 331-residue protein sequence, read N- to C-terminus: Cathepsin S (331 aa).

The first 16 residues, 1–16 (MNWLVWALLLCSSAMA), serve as a signal peptide directing secretion. The propeptide at 17–114 (HVHRDPTLDH…VTYKSDPNQK (98 aa)) is activation peptide. Residue Asn104 is glycosylated (N-linked (GlcNAc...) asparagine). Cystine bridges form between Cys126-Cys224, Cys136-Cys180, Cys170-Cys213, and Cys272-Cys320. Residue Cys139 is part of the active site. Active-site residues include His278 and Asn298.

The protein belongs to the peptidase C1 family. Monomer.

The protein localises to the lysosome. It is found in the secreted. It localises to the cytoplasmic vesicle. The protein resides in the phagosome. It catalyses the reaction Similar to cathepsin L, but with much less activity on Z-Phe-Arg-|-NHMec, and more activity on the Z-Val-Val-Arg-|-Xaa compound.. Its function is as follows. Thiol protease. Key protease responsible for the removal of the invariant chain from MHC class II molecules and MHC class II antigen presentation. The bond-specificity of this proteinase is in part similar to the specificities of cathepsin L. The sequence is that of Cathepsin S (CTSS) from Bos taurus (Bovine).